The sequence spans 1445 residues: CD109 antigen (1445 aa).

A signal peptide spans 1–21 (MQGPPLLTAAHLLCVCTAALA). 8 N-linked (GlcNAc...) asparagine glycosylation sites follow: Asn68, Asn118, Asn247, Asn279, Asn365, Asn419, Asn513, and Asn645. Residues 593-702 (DKSVNLMNAS…TWIWLDTNMG (110 aa)) form a bait region (approximate) region. Residues 921–924 (CGEQ) constitute a cross-link (isoglutamyl cysteine thioester (Cys-Gln)). N-linked (GlcNAc...) asparagine glycans are attached at residues Asn1086 and Asn1355. The GPI-anchor amidated alanine moiety is linked to residue Ala1420. Positions 1421-1445 (SGSHHHSSVIFIFCFKLLYFMELWL) are cleaved as a propeptide — removed in mature form.

Belongs to the protease inhibitor I39 (alpha-2-macroglobulin) family. Heterodimer; disulfide-linked. Interacts with TGFB1 and TGFBR1. Forms a heteromeric complex with TGFBR1, TGFBR2 and TGFBR3 in a ligand-independent manner. N-glycosylated. In terms of processing, 2 forms of 150 (p150) and 120 kDa (p120) exist due to proteolytic degradation from a 180 kDa form. As to expression, widely expressed with high level in uterus, aorta, heart, lung, trachea, placenta and in fetal heart, kidney, liver, spleen and lung. Expressed by CD34(+) acute myeloid leukemia cell lines, T-cell lines, activated T-lymphoblasts, endothelial cells and activated platelets. Isoform 4 is expressed in placenta. Isoform 1 is expressed in keratinocytes and placenta.

The protein resides in the cell membrane. Its function is as follows. Modulates negatively TGFB1 signaling in keratinocytes. In Homo sapiens (Human), this protein is CD109 antigen (CD109).